The following is a 316-amino-acid chain: Aspartate carbamoyltransferase catalytic subunit (316 aa).

Carbamoyl phosphate is bound by residues arginine 58 and threonine 59. Lysine 86 is an L-aspartate binding site. Arginine 108, histidine 136, and glutamine 139 together coordinate carbamoyl phosphate. Residues arginine 169 and arginine 223 each coordinate L-aspartate. Carbamoyl phosphate is bound by residues glycine 264 and proline 265.

The protein belongs to the aspartate/ornithine carbamoyltransferase superfamily. ATCase family. Heterododecamer (2C3:3R2) of six catalytic PyrB chains organized as two trimers (C3), and six regulatory PyrI chains organized as three dimers (R2).

The enzyme catalyses carbamoyl phosphate + L-aspartate = N-carbamoyl-L-aspartate + phosphate + H(+). It participates in pyrimidine metabolism; UMP biosynthesis via de novo pathway; (S)-dihydroorotate from bicarbonate: step 2/3. Its function is as follows. Catalyzes the condensation of carbamoyl phosphate and aspartate to form carbamoyl aspartate and inorganic phosphate, the committed step in the de novo pyrimidine nucleotide biosynthesis pathway. The chain is Aspartate carbamoyltransferase catalytic subunit from Dinoroseobacter shibae (strain DSM 16493 / NCIMB 14021 / DFL 12).